The primary structure comprises 92 residues: Putative transcription elongation factor S-II-like protein 81R (92 aa).

The TFIIS-type zinc-finger motif lies at 51–91 (GTVKCPGCGSRRVHALQRQTRSADEPMTLFAMCSECGKRWT). The Zn(2+) site is built by C55, C58, C83, and C86.

The chain is Putative transcription elongation factor S-II-like protein 81R from Dryophytes versicolor (chameleon treefrog).